The sequence spans 412 residues: 43 kDa receptor-associated protein of the synapse (412 aa).

Gly2 carries the N-myristoyl glycine lipid modification. 7 TPR repeats span residues 6–39 (TKQQIEKGLHLYQSNQTEKALQVWMRVLEKSADP), 83–116 (TEGYLNLARSNEKLCEFQKTISYCKTCLNMQGTT), 123–156 (GQVSLSMGNAFLGLSIFQKALECFEKALRYAHNN), 163–196 (CRVCCSLGNFYAQIKDYEKALFFPCKAAELVNDY), 206–239 (AMSQYHMAVAYRKLGRLADAMDCCEESMKIALQH), 246–279 (ALCLLCFADIHLSRRDVQTAFPRYDSAMSIMTEI), and 286–319 (IQVLLGVAKCWMIQKELDKALESIEKAQELAEGL). A Phosphotyrosine modification is found at Tyr196. The RING-type zinc finger occupies 363 to 403 (CGMCGESIGEKNNQLQALPCSHFFHLKCLQTNGTRGCPNCR).

It belongs to the RAPsyn family. In terms of tissue distribution, expressed in muscle fibers and in neurons.

It localises to the cell membrane. Its subcellular location is the postsynaptic cell membrane. The protein resides in the cytoplasm. The protein localises to the cytoskeleton. Postsynaptic protein required for clustering of nicotinic acetylcholine receptors (nAChRs) at the neuromuscular junction. It may link the receptor to the underlying postsynaptic cytoskeleton, possibly by direct association with actin or spectrin. The protein is 43 kDa receptor-associated protein of the synapse (RAPSN) of Gallus gallus (Chicken).